A 261-amino-acid chain; its full sequence is Acidic leucine-rich nuclear phosphoprotein 32 family member B (261 aa).

LRR repeat units follow at residues 16-40 (PAAVRELVLDNCKSNDGKIEGLTAE), 43-64 (NLEFLSLINVGLISVSNLPKLP), 65-87 (KLKKLELSDNRICGGLDMLAEKL), and 89-110 (NLTHLNLSGNKLKDIGTLEPLK). N6-acetyllysine is present on Lys86. One can recognise an LRRCT domain in the interval 123–161 (CEVTNLNDYRESVFKLLPQLTYLDGYDREDREAPDSDAE). The tract at residues 149–261 (DREDREAPDS…RETDDEGEDD (113 aa)) is disordered. Residues 157–243 (DSDAEVDGVD…DEDEDEEEEE (87 aa)) are compositionally biased toward acidic residues. Ser158 carries the post-translational modification Phosphoserine. Basic and acidic residues predominate over residues 244–254 (SGKGEGRKRET). A Phosphothreonine modification is found at Thr254.

The protein belongs to the ANP32 family. As to quaternary structure, monomer. Interacts with histones H3 and H4. Post-translationally, some glutamate residues are glycylated by TTLL8. This modification occurs exclusively on glutamate residues and results in a glycine chain on the gamma-carboxyl group.

Its subcellular location is the nucleus. Its function is as follows. Multifunctional protein working as a cell cycle progression factor as well as a cell survival factor. Required for the progression from the G1 to the S phase. Anti-apoptotic protein which functions as a caspase-3 inhibitor. Has no phosphatase 2A (PP2A) inhibitor activity. Exhibits histone chaperone properties, stimulating core histones to assemble into a nucleosome. This is Acidic leucine-rich nuclear phosphoprotein 32 family member B (ANP32B) from Ovis aries (Sheep).